The following is a 93-amino-acid chain: Small ribosomal subunit protein uS19 (93 aa).

The disordered stretch occupies residues 72–93 (GEFSPTRTYRGHNKKDKKMQKK). Residues 80–93 (YRGHNKKDKKMQKK) are compositionally biased toward basic residues.

The protein belongs to the universal ribosomal protein uS19 family.

Functionally, protein S19 forms a complex with S13 that binds strongly to the 16S ribosomal RNA. This Aster yellows witches'-broom phytoplasma (strain AYWB) protein is Small ribosomal subunit protein uS19.